The sequence spans 510 residues: Maturase K (510 aa).

The protein belongs to the intron maturase 2 family. MatK subfamily.

Its subcellular location is the plastid. The protein resides in the chloroplast. Usually encoded in the trnK tRNA gene intron. Probably assists in splicing its own and other chloroplast group II introns. This Mammillaria haageana (Cactus) protein is Maturase K.